The primary structure comprises 273 residues: Ribosomal RNA small subunit methyltransferase A (273 aa).

N18, L20, G45, E66, D91, and N113 together coordinate S-adenosyl-L-methionine.

This sequence belongs to the class I-like SAM-binding methyltransferase superfamily. rRNA adenine N(6)-methyltransferase family. RsmA subfamily.

The protein localises to the cytoplasm. The catalysed reaction is adenosine(1518)/adenosine(1519) in 16S rRNA + 4 S-adenosyl-L-methionine = N(6)-dimethyladenosine(1518)/N(6)-dimethyladenosine(1519) in 16S rRNA + 4 S-adenosyl-L-homocysteine + 4 H(+). Functionally, specifically dimethylates two adjacent adenosines (A1518 and A1519) in the loop of a conserved hairpin near the 3'-end of 16S rRNA in the 30S particle. May play a critical role in biogenesis of 30S subunits. In Salmonella choleraesuis (strain SC-B67), this protein is Ribosomal RNA small subunit methyltransferase A.